The primary structure comprises 247 residues: Triosephosphate isomerase (247 aa).

Substrate-binding residues include N10 and K12. H95 functions as the Electrophile in the catalytic mechanism. Residue E165 is the Proton acceptor of the active site.

Belongs to the triosephosphate isomerase family. Homodimer.

The catalysed reaction is D-glyceraldehyde 3-phosphate = dihydroxyacetone phosphate. The protein operates within carbohydrate biosynthesis; gluconeogenesis. It functions in the pathway carbohydrate degradation; glycolysis; D-glyceraldehyde 3-phosphate from glycerone phosphate: step 1/1. In Yarrowia lipolytica (strain CLIB 122 / E 150) (Yeast), this protein is Triosephosphate isomerase (TPI1).